A 426-amino-acid chain; its full sequence is NADH-quinone oxidoreductase subunit F (426 aa).

An NAD(+)-binding site is contributed by 65–74; it reads GRGGAGFPTG. 176–223 contacts FMN; the sequence is GAGAYICGEETALIESLEGKRGHPRLKPPYPVQKGLWGKPTVVNNVET. Positions 347, 350, 353, and 393 each coordinate [4Fe-4S] cluster.

The protein belongs to the complex I 51 kDa subunit family. Requires FMN as cofactor. [4Fe-4S] cluster is required as a cofactor.

The enzyme catalyses a quinone + NADH + 5 H(+)(in) = a quinol + NAD(+) + 4 H(+)(out). In terms of biological role, NDH-1 shuttles electrons from NADH, via FMN and iron-sulfur (Fe-S) centers, to quinones in the respiratory chain. Couples the redox reaction to proton translocation (for every two electrons transferred, four hydrogen ions are translocated across the cytoplasmic membrane), and thus conserves the redox energy in a proton gradient. This chain is NADH-quinone oxidoreductase subunit F (nuoF), found in Aquifex aeolicus (strain VF5).